Here is a 120-residue protein sequence, read N- to C-terminus: MSAQEIIRSIEAEQLKSNLPDIYVGDTVKVGVKIKEGEKYRVQPYEGVVIAKRNGGINETITVRKVFQGVGVERVFLLHSPRIDSIKVLRRGKVRRAKLYYLRDRVGKATRIKQRFDRPL.

Belongs to the bacterial ribosomal protein bL19 family.

In terms of biological role, this protein is located at the 30S-50S ribosomal subunit interface and may play a role in the structure and function of the aminoacyl-tRNA binding site. The polypeptide is Large ribosomal subunit protein bL19 (Nostoc punctiforme (strain ATCC 29133 / PCC 73102)).